The following is a 206-amino-acid chain: Shieldin complex subunit 1 (206 aa).

The tract at residues 27-94 is disordered; that stretch reads SSYEASQRVS…GQLETNEEED (68 aa). Over residues 32-55 the composition is skewed to low complexity; it reads SQRVSQGSSNSLSSLESHPFLSSS. Over residues 56 to 74 the composition is skewed to polar residues; sequence TTDPDSNSLNTEQKGSWDS.

In terms of assembly, component of the shieldin complex, consisting of SHLD1, SHLD2, SHLD3 and MAD2L2/REV7. Within the complex, SHLD2 forms a scaffold which interacts with a SHLD3-MAD2L2 subcomplex via its N-terminus, and with SHLD1 via its C-terminus. Interacts with ASTE1.

Its subcellular location is the chromosome. Component of the shieldin complex, which plays an important role in repair of DNA double-stranded breaks (DSBs). During G1 and S phase of the cell cycle, the complex functions downstream of TP53BP1 to promote non-homologous end joining (NHEJ) and suppress DNA end resection. Mediates various NHEJ-dependent processes including immunoglobulin class-switch recombination, and fusion of unprotected telomeres. This Mus musculus (Mouse) protein is Shieldin complex subunit 1.